A 323-amino-acid chain; its full sequence is Beta-ketoacyl-[acyl-carrier-protein] synthase III (323 aa).

Catalysis depends on residues cysteine 113 and histidine 250. An ACP-binding region spans residues 251 to 255; the sequence is QANKR. Asparagine 280 is an active-site residue.

Belongs to the thiolase-like superfamily. FabH family. As to quaternary structure, homodimer.

The protein localises to the cytoplasm. The enzyme catalyses malonyl-[ACP] + acetyl-CoA + H(+) = 3-oxobutanoyl-[ACP] + CO2 + CoA. It functions in the pathway lipid metabolism; fatty acid biosynthesis. In terms of biological role, catalyzes the condensation reaction of fatty acid synthesis by the addition to an acyl acceptor of two carbons from malonyl-ACP. Catalyzes the first condensation reaction which initiates fatty acid synthesis and may therefore play a role in governing the total rate of fatty acid production. Possesses both acetoacetyl-ACP synthase and acetyl transacylase activities. Its substrate specificity determines the biosynthesis of branched-chain and/or straight-chain of fatty acids. This Agrobacterium fabrum (strain C58 / ATCC 33970) (Agrobacterium tumefaciens (strain C58)) protein is Beta-ketoacyl-[acyl-carrier-protein] synthase III.